A 165-amino-acid chain; its full sequence is Chorismate pyruvate-lyase (165 aa).

Substrate is bound by residues Met35, Arg77, Leu115, and Glu156.

The protein belongs to the UbiC family. In terms of assembly, monomer.

It localises to the cytoplasm. The catalysed reaction is chorismate = 4-hydroxybenzoate + pyruvate. The protein operates within cofactor biosynthesis; ubiquinone biosynthesis. Its function is as follows. Removes the pyruvyl group from chorismate, with concomitant aromatization of the ring, to provide 4-hydroxybenzoate (4HB) for the ubiquinone pathway. The protein is Chorismate pyruvate-lyase of Shigella sonnei (strain Ss046).